The primary structure comprises 223 residues: 2-C-methyl-D-erythritol 4-phosphate cytidylyltransferase (223 aa).

Belongs to the IspD/TarI cytidylyltransferase family. IspD subfamily.

The enzyme catalyses 2-C-methyl-D-erythritol 4-phosphate + CTP + H(+) = 4-CDP-2-C-methyl-D-erythritol + diphosphate. It functions in the pathway isoprenoid biosynthesis; isopentenyl diphosphate biosynthesis via DXP pathway; isopentenyl diphosphate from 1-deoxy-D-xylulose 5-phosphate: step 2/6. Functionally, catalyzes the formation of 4-diphosphocytidyl-2-C-methyl-D-erythritol from CTP and 2-C-methyl-D-erythritol 4-phosphate (MEP). In Prochlorococcus marinus (strain MIT 9215), this protein is 2-C-methyl-D-erythritol 4-phosphate cytidylyltransferase.